We begin with the raw amino-acid sequence, 102 residues long: Urease subunit beta (102 aa).

It belongs to the urease beta subunit family. In terms of assembly, heterotrimer of UreA (gamma), UreB (beta) and UreC (alpha) subunits. Three heterotrimers associate to form the active enzyme.

Its subcellular location is the cytoplasm. It catalyses the reaction urea + 2 H2O + H(+) = hydrogencarbonate + 2 NH4(+). Its pathway is nitrogen metabolism; urea degradation; CO(2) and NH(3) from urea (urease route): step 1/1. The sequence is that of Urease subunit beta from Methylobacillus flagellatus (strain ATCC 51484 / DSM 6875 / VKM B-1610 / KT).